The sequence spans 240 residues: Phosphoribosylaminoimidazole-succinocarboxamide synthase (240 aa).

Belongs to the SAICAR synthetase family.

The enzyme catalyses 5-amino-1-(5-phospho-D-ribosyl)imidazole-4-carboxylate + L-aspartate + ATP = (2S)-2-[5-amino-1-(5-phospho-beta-D-ribosyl)imidazole-4-carboxamido]succinate + ADP + phosphate + 2 H(+). It participates in purine metabolism; IMP biosynthesis via de novo pathway; 5-amino-1-(5-phospho-D-ribosyl)imidazole-4-carboxamide from 5-amino-1-(5-phospho-D-ribosyl)imidazole-4-carboxylate: step 1/2. This Wolbachia pipientis wMel protein is Phosphoribosylaminoimidazole-succinocarboxamide synthase.